Reading from the N-terminus, the 913-residue chain is DNA mismatch repair protein MutS (913 aa).

A disordered region spans residues 18–50 (NNKQKEKTKIPEDLSLEDLKKESQKRPRQRKNS). Over residues 19–42 (NKQKEKTKIPEDLSLEDLKKESQK) the composition is skewed to basic and acidic residues. Position 720–727 (720–727 (GPNASGKS)) interacts with ATP.

This sequence belongs to the DNA mismatch repair MutS family.

This protein is involved in the repair of mismatches in DNA. It is possible that it carries out the mismatch recognition step. This protein has a weak ATPase activity. This chain is DNA mismatch repair protein MutS, found in Prochlorococcus marinus (strain MIT 9301).